A 277-amino-acid polypeptide reads, in one-letter code: Large ribosomal subunit protein uL2 (277 aa).

Disordered stretches follow at residues Met-1 to Glu-23, Pro-36 to His-58, and Thr-219 to Lys-277. Residues Pro-8–Asp-20 are compositionally biased toward polar residues. Residues Lys-258 to Lys-277 are compositionally biased toward basic residues.

This sequence belongs to the universal ribosomal protein uL2 family. As to quaternary structure, part of the 50S ribosomal subunit. Forms a bridge to the 30S subunit in the 70S ribosome.

Its function is as follows. One of the primary rRNA binding proteins. Required for association of the 30S and 50S subunits to form the 70S ribosome, for tRNA binding and peptide bond formation. It has been suggested to have peptidyltransferase activity; this is somewhat controversial. Makes several contacts with the 16S rRNA in the 70S ribosome. This chain is Large ribosomal subunit protein uL2, found in Bacillus licheniformis (strain ATCC 14580 / DSM 13 / JCM 2505 / CCUG 7422 / NBRC 12200 / NCIMB 9375 / NCTC 10341 / NRRL NRS-1264 / Gibson 46).